Reading from the N-terminus, the 180-residue chain is UPF0134 protein MPN_127 (180 aa).

It belongs to the UPF0134 family.

This Mycoplasma pneumoniae (strain ATCC 29342 / M129 / Subtype 1) (Mycoplasmoides pneumoniae) protein is UPF0134 protein MPN_127.